Here is a 928-residue protein sequence, read N- to C-terminus: MPPKTPRKTAATAAAAAAEPPAPPPPPPPEEDPEQDSGPEDLPLVRLEFEETEEPDFTALCQKLKIPDHVRERAWLTWEKVSSVDGVLGGYIQKKKELWGICIFIAAVDLDEMSFTFTELQKNIEISVHKFFNLLKEIDTSTKVDNAMSRLLKKYDVLFALFSKLERTCELIYLTQPSSSISTEINSALVLKVSWITFLLAKGEVLQMEDDLVISFQLMLCVLDYFIKLSPPMLLKEPYKTAVIPINGSPRTPRRGQNRSARIAKQLENDTRIIEVLCKEHECNIDEVKNVYFKNFIPFMNSLGLVTSNGLPEVENLSKRYEEIYLKNKDLDARLFLDHDKTLQTDSIDSFETQRTPRKSNLDEEVNVIPPHTPVRTVMNTIQQLMMILNSASDQPSENLISYFNNCTVNPKESILKRVKDIGYIFKEKFAKAVGQGCVEIGSQRYKLGVRLYYRVMESMLKSEEERLSIQNFSKLLNDNIFHMSLLACALEVVMATYSRSTSQNLDSGTDLSFPWILNVLNLKAFDFYKVIESFIKAEGNLTREMIKHLERCEHRIMESLAWLSDSPLFDLIKQSKDREGPTDHLESACPLNLPLQNNHTAADMYLSPVRSPKKKGSTTRVNSTANAETQATSAFQTQKPLKSTSLSLFYKKVYRLAYLRLNTLCERLLSEHPELEHIIWTLFQHTLQNEYELMRDRHLDQIMMCSMYGICKVKNIDLKFKIIVTAYKDLPHAVQETFKRVLIKEEEYDSIIVFYNSVFMQRLKTNILQYASTRPPTLSPIPHIPRSPYKFPSSPLRIPGGNIYISPLKSPYKISEGLPTPTKMTPRSRILVSIGESFGTSEKFQKINQMVCNSDRVLKRSAEGSNPPKPLKKLRFDIEGSDEADGSKHLPGESKFQQKLAEMTSTRTRMQKQKMNDSMDTSNKEEK.

Residues 1–42 (MPPKTPRKTAATAAAAAAEPPAPPPPPPPEEDPEQDSGPEDL) are disordered. Pro-2 carries the post-translational modification N,N-dimethylproline. Residues 8 to 19 (KTAATAAAAAAE) show a composition bias toward low complexity. Positions 29-39 (PEEDPEQDSGP) are enriched in acidic residues. Ser-37 carries the post-translational modification Phosphoserine. Ser-249 carries the post-translational modification Phosphoserine; by CDK1. A Phosphothreonine; by CDK1 modification is found at Thr-252. Residue Thr-356 is modified to Phosphothreonine. A Phosphothreonine; by CDK1 modification is found at Thr-373. Residues 373-579 (TPVRTVMNTI…FDLIKQSKDR (207 aa)) form a domain A region. The interval 373-771 (TPVRTVMNTI…QRLKTNILQY (399 aa)) is pocket; binds T and E1A. A Phosphoserine; by CDK2 modification is found at Ser-567. Residues 580 to 639 (EGPTDHLESACPLNLPLQNNHTAADMYLSPVRSPKKKGSTTRVNSTANAETQATSAFQTQ) form a spacer region. The residue at position 608 (Ser-608) is a Phosphoserine. Residues 610 to 632 (VRSPKKKGSTTRVNSTANAETQA) are disordered. Ser-612 bears the Phosphoserine; by CHEK2 and CHEK1 mark. The segment covering 619 to 632 (TTRVNSTANAETQA) has biased composition (polar residues). Residue Ser-624 is modified to Phosphoserine. A domain B region spans residues 640–771 (KPLKSTSLSL…QRLKTNILQY (132 aa)). Residues 763 to 928 (RLKTNILQYA…SMDTSNKEEK (166 aa)) are interaction with LIMD1. The interval 771-928 (YASTRPPTLS…SMDTSNKEEK (158 aa)) is domain C; mediates interaction with E4F1. 3 positions are modified to phosphoserine: Ser-780, Ser-788, and Ser-795. Phosphoserine; by CDK1 and CDK3 is present on Ser-807. Lys-810 bears the N6-methyllysine; by SMYD2 mark. A Phosphoserine; by CDK1 and CDK3 modification is found at Ser-811. Residue Thr-821 is modified to Phosphothreonine; by CDK6. Thr-823 is subject to Phosphothreonine. Thr-826 carries the post-translational modification Phosphothreonine; by CDK4. Thr-841 is modified (phosphothreonine). Ser-855 is subject to Phosphoserine. The residue at position 860 (Lys-860) is an N6-methyllysine; by SMYD2. The Bipartite nuclear localization signal motif lies at 860–876 (KRSAEGSNPPKPLKKLR). Residues 860-928 (KRSAEGSNPP…SMDTSNKEEK (69 aa)) are disordered. N6-acetyllysine; by PCAF is present on residues Lys-873 and Lys-874. Basic and acidic residues predominate over residues 915–928 (KMNDSMDTSNKEEK).

The protein belongs to the retinoblastoma protein (RB) family. In terms of assembly, the hypophosphorylated form interacts with and sequesters the E2F1 transcription factor, thereby inhibiting E2F1 transcription. Interacts with heterodimeric E2F/DP transcription factor complexes containing TFDP1 and either E2F1, E2F3, E2F4 or E2F5, or TFDP2 and E2F4. Interacts (when hyperphosphorylated and hypophosphorylated) with PKP3; the interaction inhibits RB1 interaction with and repression of the transcription factor E2F1, potentially via sequestering RB1 to the cytoplasm. The unphosphorylated form interacts with EID1, ARID3B, KDM5A, SUV39H1, MJD2A/JHDM3A and THOC1. Interacts with the N-terminal domain of TAF1. Interacts with SNW1, ATAD5, AATF, DNMT1, LIN9, LMNA, KMT5B, KMT5C, PELP1, UHRF2 and TMPO-alpha. Interacts with GRIP1 and UBR4. Interacts with ARID4A and KDM5B. Interacts with E4F1 and LIMD1. Interacts with SMARCA4/BRG1 and HDAC1. Interacts with PSMA3 and USP4. Interacts (when methylated at Lys-860) with L3MBTL1. Interacts with CHEK2; phosphorylates RB1. Interacts with CDK1 and CDK2. Interacts with PRMT2. Interacts with CEBPA. P-TEFB complex interacts with RB1; promotes phosphorylation of RB1. Interacts with RBBP9; the interaction disrupts RB1 binding to E2F1. Interacts with KAT2B/PCAF and EP300/P300. Interacts with PAX5. Interacts (phosphorylated and unphosphorylated) with BLCAP. May interact with NDC80. (Microbial infection) Interacts with adenovirus E1A protein. As to quaternary structure, (Microbial infection) Interacts with HPV E7 protein. In terms of assembly, (Microbial infection) Interacts with SV40 large T antigen. (Microbial infection) Interacts with human cytomegalovirus/HHV-5 proteins UL82 and UL123. As to quaternary structure, (Microbial infection) Interacts with molluscum contagiosum virus protein MC007. In terms of processing, phosphorylated by CDK6 and CDK4, and subsequently by CDK2 at Ser-567 in G1, thereby releasing E2F1 which is then able to activate cell growth. Dephosphorylated at the late M phase. SV40 large T antigen, HPV E7 and adenovirus E1A bind to the underphosphorylated, active form of pRb. Phosphorylation at Thr-821 and Thr-826 promotes interaction between the C-terminal domain C and the Pocket domain, and thereby inhibits interactions with heterodimeric E2F/DP transcription factor complexes. Dephosphorylated at Ser-795 by calcineruin upon calcium stimulation. CDK3/cyclin-C-mediated phosphorylation at Ser-807 and Ser-811 is required for G0-G1 transition. Phosphorylated by CDK1 and CDK2 upon TGFB1-mediated apoptosis. Post-translationally, N-terminus is methylated by METTL11A/NTM1. Monomethylation at Lys-810 by SMYD2 enhances phosphorylation at Ser-807 and Ser-811, and promotes cell cycle progression. Monomethylation at Lys-860 by SMYD2 promotes interaction with L3MBTL1. Acetylated during keratinocyte differentiation. Acetylation at Lys-873 and Lys-874 regulates subcellular localization. Can be deacetylated by SIRT1. As to expression, expressed in the retina. Expressed in foreskin keratinocytes (at protein level).

It localises to the nucleus. Its subcellular location is the cytoplasm. In terms of biological role, tumor suppressor that is a key regulator of the G1/S transition of the cell cycle. The hypophosphorylated form binds transcription regulators of the E2F family, preventing transcription of E2F-responsive genes. Both physically blocks E2Fs transactivating domain and recruits chromatin-modifying enzymes that actively repress transcription. Cyclin and CDK-dependent phosphorylation of RB1 induces its dissociation from E2Fs, thereby activating transcription of E2F responsive genes and triggering entry into S phase. RB1 also promotes the G0-G1 transition upon phosphorylation and activation by CDK3/cyclin-C. Directly involved in heterochromatin formation by maintaining overall chromatin structure and, in particular, that of constitutive heterochromatin by stabilizing histone methylation. Recruits and targets histone methyltransferases SUV39H1, KMT5B and KMT5C, leading to epigenetic transcriptional repression. Controls histone H4 'Lys-20' trimethylation. Inhibits the intrinsic kinase activity of TAF1. Mediates transcriptional repression by SMARCA4/BRG1 by recruiting a histone deacetylase (HDAC) complex to the c-FOS promoter. In resting neurons, transcription of the c-FOS promoter is inhibited by BRG1-dependent recruitment of a phospho-RB1-HDAC1 repressor complex. Upon calcium influx, RB1 is dephosphorylated by calcineurin, which leads to release of the repressor complex. Functionally, (Microbial infection) In case of viral infections, interactions with SV40 large T antigen, HPV E7 protein or adenovirus E1A protein induce the disassembly of RB1-E2F1 complex thereby disrupting RB1's activity. The protein is Retinoblastoma-associated protein (RB1) of Homo sapiens (Human).